The sequence spans 366 residues: Protein-glutamate methylesterase/protein-glutamine glutaminase (366 aa).

One can recognise a Response regulatory domain in the interval 5 to 123 (RVLVVDDSVV…SVGRSMEQVR (119 aa)). Asp-56 is modified (4-aspartylphosphate). The region spanning 163–355 (PLGGHRLLVI…PEILRRLARQ (193 aa)) is the CheB-type methylesterase domain. Catalysis depends on residues Ser-175, His-201, and Asp-297.

It belongs to the CheB family. In terms of processing, phosphorylated by CheA. Phosphorylation of the N-terminal regulatory domain activates the methylesterase activity.

The protein resides in the cytoplasm. The catalysed reaction is [protein]-L-glutamate 5-O-methyl ester + H2O = L-glutamyl-[protein] + methanol + H(+). It carries out the reaction L-glutaminyl-[protein] + H2O = L-glutamyl-[protein] + NH4(+). Involved in chemotaxis. Part of a chemotaxis signal transduction system that modulates chemotaxis in response to various stimuli. Catalyzes the demethylation of specific methylglutamate residues introduced into the chemoreceptors (methyl-accepting chemotaxis proteins or MCP) by CheR. Also mediates the irreversible deamidation of specific glutamine residues to glutamic acid. This chain is Protein-glutamate methylesterase/protein-glutamine glutaminase, found in Nocardioides sp. (strain ATCC BAA-499 / JS614).